Reading from the N-terminus, the 137-residue chain is Ribosome-binding factor A (137 aa).

It belongs to the RbfA family. In terms of assembly, monomer. Binds 30S ribosomal subunits, but not 50S ribosomal subunits or 70S ribosomes.

It is found in the cytoplasm. Functionally, one of several proteins that assist in the late maturation steps of the functional core of the 30S ribosomal subunit. Associates with free 30S ribosomal subunits (but not with 30S subunits that are part of 70S ribosomes or polysomes). Required for efficient processing of 16S rRNA. May interact with the 5'-terminal helix region of 16S rRNA. The chain is Ribosome-binding factor A from Synechococcus sp. (strain ATCC 27144 / PCC 6301 / SAUG 1402/1) (Anacystis nidulans).